Here is a 239-residue protein sequence, read N- to C-terminus: 4-hydroxy-tetrahydrodipicolinate reductase (239 aa).

NAD(+) contacts are provided by residues 8 to 13 (GSTGKM), 78 to 80 (GTT), and 102 to 105 (SANM). His134 serves as the catalytic Proton donor/acceptor. (S)-2,3,4,5-tetrahydrodipicolinate is bound at residue His135. Lys138 functions as the Proton donor in the catalytic mechanism. Position 144–145 (144–145 (GT)) interacts with (S)-2,3,4,5-tetrahydrodipicolinate.

This sequence belongs to the DapB family.

Its subcellular location is the cytoplasm. The catalysed reaction is (S)-2,3,4,5-tetrahydrodipicolinate + NAD(+) + H2O = (2S,4S)-4-hydroxy-2,3,4,5-tetrahydrodipicolinate + NADH + H(+). It catalyses the reaction (S)-2,3,4,5-tetrahydrodipicolinate + NADP(+) + H2O = (2S,4S)-4-hydroxy-2,3,4,5-tetrahydrodipicolinate + NADPH + H(+). The protein operates within amino-acid biosynthesis; L-lysine biosynthesis via DAP pathway; (S)-tetrahydrodipicolinate from L-aspartate: step 4/4. In terms of biological role, catalyzes the conversion of 4-hydroxy-tetrahydrodipicolinate (HTPA) to tetrahydrodipicolinate. This chain is 4-hydroxy-tetrahydrodipicolinate reductase, found in Rickettsia africae (strain ESF-5).